The primary structure comprises 342 residues: Heat-inducible transcription repressor HrcA (342 aa).

It belongs to the HrcA family.

Its function is as follows. Negative regulator of class I heat shock genes (grpE-dnaK-dnaJ and groELS operons). Prevents heat-shock induction of these operons. In Oceanobacillus iheyensis (strain DSM 14371 / CIP 107618 / JCM 11309 / KCTC 3954 / HTE831), this protein is Heat-inducible transcription repressor HrcA.